The sequence spans 123 residues: MRRFVRSLSSTGRSQTGSLPVRGLRKLLRFYQLTFSSLVGTQCRHLPTCSAYMDEALARHGVWAGLFIGLARLSRCHPWGTAGYDPVPDQLDANVPRLQPWRHGRWRGPLEITWKPEHKDQNL.

It belongs to the UPF0161 family.

The protein localises to the cell inner membrane. In terms of biological role, could be involved in insertion of integral membrane proteins into the membrane. In Beijerinckia indica subsp. indica (strain ATCC 9039 / DSM 1715 / NCIMB 8712), this protein is Putative membrane protein insertion efficiency factor.